Here is a 468-residue protein sequence, read N- to C-terminus: Probable Xaa-Pro aminopeptidase PEPP (468 aa).

Mn(2+) contacts are provided by Asp-264, Asp-275, Glu-398, and Glu-438.

This sequence belongs to the peptidase M24B family. Mn(2+) is required as a cofactor.

It catalyses the reaction Release of any N-terminal amino acid, including proline, that is linked to proline, even from a dipeptide or tripeptide.. In terms of biological role, catalyzes the removal of a penultimate prolyl residue from the N-termini of peptides. The sequence is that of Probable Xaa-Pro aminopeptidase PEPP (PEPP) from Paracoccidioides brasiliensis (strain Pb03).